We begin with the raw amino-acid sequence, 692 residues long: Formate hydrogenlyase transcriptional activator (692 aa).

The GAF domain occupies 202 to 344; the sequence is DIDELVSEVA…QIAERVAIAV (143 aa). The 230-residue stretch at 381 to 610 folds into the Sigma-54 factor interaction domain; that stretch reads IIGRSEAMYN…LENVVERAVL (230 aa). ATP contacts are provided by residues 409–416 and 472–481; these read GETGTGKE and ADKSSLFLDE. A DNA-binding region (H-T-H motif) is located at residues 663–682; sequence PKGAAQRLGLKRTTLLSRMK.

In terms of biological role, required for induction of expression of the formate dehydrogenase H and hydrogenase-3 structural genes. The polypeptide is Formate hydrogenlyase transcriptional activator (fhlA) (Salmonella typhimurium (strain LT2 / SGSC1412 / ATCC 700720)).